A 155-amino-acid chain; its full sequence is UPF0260 protein Smed_0627 (155 aa).

This sequence belongs to the UPF0260 family.

This is UPF0260 protein Smed_0627 from Sinorhizobium medicae (strain WSM419) (Ensifer medicae).